Consider the following 331-residue polypeptide: Biotin synthase (331 aa).

Positions 46–275 constitute a Radical SAM core domain; sequence YYGKKVKLNM…TKEIRISGGR (230 aa). 3 residues coordinate [4Fe-4S] cluster: Cys-64, Cys-68, and Cys-71. [2Fe-2S] cluster-binding residues include Cys-108, Cys-140, Cys-200, and Arg-270.

This sequence belongs to the radical SAM superfamily. Biotin synthase family. Homodimer. [4Fe-4S] cluster serves as cofactor. It depends on [2Fe-2S] cluster as a cofactor.

The catalysed reaction is (4R,5S)-dethiobiotin + (sulfur carrier)-SH + 2 reduced [2Fe-2S]-[ferredoxin] + 2 S-adenosyl-L-methionine = (sulfur carrier)-H + biotin + 2 5'-deoxyadenosine + 2 L-methionine + 2 oxidized [2Fe-2S]-[ferredoxin]. It functions in the pathway cofactor biosynthesis; biotin biosynthesis; biotin from 7,8-diaminononanoate: step 2/2. Its function is as follows. Catalyzes the conversion of dethiobiotin (DTB) to biotin by the insertion of a sulfur atom into dethiobiotin via a radical-based mechanism. This chain is Biotin synthase, found in Lysinibacillus sphaericus (strain C3-41).